Reading from the N-terminus, the 1981-residue chain is Nonribosomal peptide synthetase rstn8 (1981 aa).

The segment at 251-638 is adenylation; sequence SYAALEQESA…ELGEIEYQAS (388 aa). A Carrier 1 domain is found at 763-840; the sequence is HHAGQKYDEM…ELFHRSQKTP (78 aa). Serine 800 carries the O-(pantetheine 4'-phosphoryl)serine modification. The tract at residues 883–1293 is condensation 1; the sequence is EDIYPCSPLQ…DASMGTILSQ (411 aa). The Carrier 2 domain maps to 1438–1514; the sequence is EPLLPLEATL…CLASTLNSRP (77 aa). Serine 1475 is modified (O-(pantetheine 4'-phosphoryl)serine). A condensation 1 region spans residues 1586-1978; it reads EEQIDLVSFA…TFAQSIERII (393 aa). The interval 1754-1774 is disordered; sequence HHHHQHEGRQHHGASETNGNR.

The protein belongs to the NRP synthetase family. It depends on pantetheine 4'-phosphate as a cofactor.

The catalysed reaction is 2 L-tryptophan = cyclo(L-Trp-L-Trp) + 2 H2O. Its pathway is alkaloid biosynthesis. Nonribosomal peptide synthetase; part of the gene cluster that mediates the biosynthesis of okaramine B, a prenylated indole alkaloid that possesses an unusual octacyclic ring system, including a four-membered azetidine ring and an eight-membered azocine ring, and that exhibits insecticidal activity against silkworm larvae. Within the pathway, okaA acts as a bimodular non-ribosomal peptide synthetase (NRPS) that condenses two tryptophan molecules into cyclo(L-Trp-L-Trp). Prenylation by the prenyltransferase okaC then leads to the formation of cyclo(N8-(alpha,alpha-dimethylallyl)-L-Trp-6a-(alpha,alpha-dime-thylallyl)-L-Trp). This is followed by indole 2,3-epoxidation by the FAD-dependent monooxygenase okaB to facilitate the formation of the hexahydropyrrolo[2,3-b]indole (HPI) moiety of okaramine C. The cytochrome P450 monooxygenase okaD then likely catalyzes formation of the eight-membered ring of okaramine A. The dioxygenase okaE further forms the unusual 2-dimethyl-3-methyl-azetidine ring to yield 12-deshydroxyl okaramine E, as well as the hydroxylation of 12-deshydroxyl okaramine E to produce okaramine E. The cytochrome P450 monoxygenase okaG converts 12-deshydroxyl okaramine E into 3-desmethyl okaramine B which is further methylated by the methyltransferase okaF into okaramine B. In a shunt pathway, okaG and okaF together are also able to convert okaramine E into okaramine D. Okaramine H is produced by nonenzymatic conversion from okaramine A. This Penicillium ochrochloron protein is Nonribosomal peptide synthetase rstn8.